The sequence spans 535 residues: Dual specificity calcium/calmodulin-dependent 3',5'-cyclic nucleotide phosphodiesterase 1A (535 aa).

Calmodulin-binding stretches follow at residues 24-44 (TEKM…QLER) and 114-137 (EKPK…MYRK). Positions 142–522 (VGLAYPAAVI…ERWKELAAQE (381 aa)) constitute a PDEase domain. The active-site Proton donor is His219. Zn(2+) contacts are provided by His223, His259, Asp260, and Asp366. Asp260 contacts Mg(2+).

This sequence belongs to the cyclic nucleotide phosphodiesterase family. PDE1 subfamily. Homodimer. Interacts with YWHAZ. The cofactor is Zn(2+). Requires Mg(2+) as cofactor. Several tissues, including brain, kidney, testes and heart.

The enzyme catalyses a nucleoside 3',5'-cyclic phosphate + H2O = a nucleoside 5'-phosphate + H(+). It catalyses the reaction 3',5'-cyclic GMP + H2O = GMP + H(+). The catalysed reaction is 3',5'-cyclic AMP + H2O = AMP + H(+). With respect to regulation, type I PDE are activated by the binding of calmodulin in the presence of Ca(2+). Its function is as follows. Calcium/calmodulin-dependent cyclic nucleotide phosphodiesterase with a dual specificity for the second messengers cGMP and cAMP, which are key regulators of many important physiological processes. Has a higher efficiency with cGMP compared to cAMP. The chain is Dual specificity calcium/calmodulin-dependent 3',5'-cyclic nucleotide phosphodiesterase 1A from Homo sapiens (Human).